A 449-amino-acid chain; its full sequence is Probable ubiquitin carboxyl-terminal hydrolase 8 (449 aa).

The UBP-type zinc finger occupies 6 to 113 (EGCQHLKLKP…FKIKNIKAWQ (108 aa)). Cysteine 8, histidine 10, cysteine 38, cysteine 41, cysteine 51, cysteine 54, cysteine 59, histidine 64, histidine 68, histidine 74, cysteine 87, and cysteine 90 together coordinate Zn(2+). One can recognise a USP domain in the interval 145–435 (RGIQNLGATC…QAYLLFYHER (291 aa)). Cysteine 154 (nucleophile) is an active-site residue. Zn(2+)-binding residues include histidine 178, cysteine 183, cysteine 188, cysteine 191, histidine 246, cysteine 257, cysteine 259, histidine 262, cysteine 275, cysteine 278, cysteine 317, and cysteine 320. The active-site Proton acceptor is the histidine 395.

It belongs to the peptidase C19 family. UBP8 subfamily. In terms of assembly, component of the 1.8 MDa SAGA (Spt-Ada-Gcn5 acetyltransferase) complex, which is composed of 19 subunits tra1, spt7, taf5, ngg1/ada3, sgf73, spt20, spt8, taf12, taf6, hfi1/ada1, ubp8, gcn5, ada2, spt3, sgf29, taf10, taf9, sgf11 and sus1. The SAGA complex is composed of 4 modules, namely the HAT (histone acetyltransferase) module (gcn5, ada2, ngg1/ada3 and sgf29), the DUB (deubiquitinating) module (ubp8, sgf11, sgf73 and sus1), the core or TAF (TBP-associated factor) module (taf5, taf6, taf9, taf10 and taf12), and the Tra1 or SPT (Suppressor of Ty) module (tra1, hfi1/ada1, spt3, spt7, spt8 and spt20). The Tra1/SPT module binds activators, the core module recruits TBP (TATA-binding protein), the HAT module contains the histone H3 acetyltransferase gcn5, and the DUB module comprises the histone H2B deubiquitinase ubp8.

It localises to the nucleus. It is found in the nucleoplasm. The catalysed reaction is Thiol-dependent hydrolysis of ester, thioester, amide, peptide and isopeptide bonds formed by the C-terminal Gly of ubiquitin (a 76-residue protein attached to proteins as an intracellular targeting signal).. Functionally, histone deubiquitinating enzyme component of the transcription coactivator SAGA complex. SAGA acts as a general cofactor required for essentially all RNA polymerase II transcription. At the promoters, SAGA is required for transcription pre-initiation complex (PIC) recruitment. It influences RNA polymerase II transcriptional activity through different activities such as TBP interaction (via core/TAF module) and promoter selectivity, interaction with transcription activators (via Tra1/SPT module), and chromatin modification through histone acetylation (via HAT module) and deubiquitination (via DUB module). SAGA preferentially acetylates histones H3 (to form H3K9ac, H3K14ac, H3K18ac and H3K23ac) and H2B and deubiquitinates histone H2B. SAGA interacts with DNA via upstream activating sequences (UASs). Within the DUB module, the correctly positioned zinc finger domains of sgf11 and sgf73 are both required to fully activate the ubiquitin hydrolase ubp8. The DUB module is also linked to the splicing efficiency of many transcripts. In Schizosaccharomyces pombe (strain 972 / ATCC 24843) (Fission yeast), this protein is Probable ubiquitin carboxyl-terminal hydrolase 8 (ubp8).